Here is a 148-residue protein sequence, read N- to C-terminus: SsrA-binding protein (148 aa).

The interval 119 to 148 is disordered; sequence AKGKKQHDKRQSMKEADWKREKQRLIKHTR. Over residues 127-142 the composition is skewed to basic and acidic residues; sequence KRQSMKEADWKREKQR.

This sequence belongs to the SmpB family.

The protein resides in the cytoplasm. Required for rescue of stalled ribosomes mediated by trans-translation. Binds to transfer-messenger RNA (tmRNA), required for stable association of tmRNA with ribosomes. tmRNA and SmpB together mimic tRNA shape, replacing the anticodon stem-loop with SmpB. tmRNA is encoded by the ssrA gene; the 2 termini fold to resemble tRNA(Ala) and it encodes a 'tag peptide', a short internal open reading frame. During trans-translation Ala-aminoacylated tmRNA acts like a tRNA, entering the A-site of stalled ribosomes, displacing the stalled mRNA. The ribosome then switches to translate the ORF on the tmRNA; the nascent peptide is terminated with the 'tag peptide' encoded by the tmRNA and targeted for degradation. The ribosome is freed to recommence translation, which seems to be the essential function of trans-translation. This Neisseria meningitidis serogroup C (strain 053442) protein is SsrA-binding protein.